A 113-amino-acid polypeptide reads, in one-letter code: Large ribosomal subunit protein bL17 (113 aa).

It belongs to the bacterial ribosomal protein bL17 family. Part of the 50S ribosomal subunit. Contacts protein L32.

This Clostridium botulinum (strain Alaska E43 / Type E3) protein is Large ribosomal subunit protein bL17.